We begin with the raw amino-acid sequence, 575 residues long: uncharacterized protein (575 aa).

The protein localises to the cytoplasm. It is found in the cytoskeleton. It localises to the microtubule organizing center. The protein resides in the spindle pole body. This is an uncharacterized protein from Schizosaccharomyces pombe (strain 972 / ATCC 24843) (Fission yeast).